A 330-amino-acid chain; its full sequence is Peroxidase N1 (330 aa).

The N-terminal stretch at 1–29 (MEYYHHSINKMAMFMVILVLAIDVTMVLG) is a signal peptide. Q30 carries the pyrrolidone carboxylic acid modification. 4 disulfides stabilise this stretch: C41–C117, C74–C79, C123–C326, and C201–C233. H72 serves as the catalytic Proton acceptor. D73, V76, G78, D80, and S82 together coordinate Ca(2+). Residue P164 participates in substrate binding. H194 is a binding site for heme b. Residue T195 participates in Ca(2+) binding. N-linked (GlcNAc...) asparagine glycosylation is present at N212. Positions 246 and 254 each coordinate Ca(2+).

Belongs to the peroxidase family. Classical plant (class III) peroxidase subfamily. The cofactor is Ca(2+). Requires heme b as cofactor. Expressed at a high level in roots and at a trace level in lower leaves. Not expressed in upper leaves, stems, flowers, seeds and shoot apices.

It is found in the secreted. The catalysed reaction is 2 a phenolic donor + H2O2 = 2 a phenolic radical donor + 2 H2O. Removal of H(2)O(2), oxidation of toxic reductants, biosynthesis and degradation of lignin, suberization, auxin catabolism, response to environmental stresses such as wounding, pathogen attack and oxidative stress. These functions might be dependent on each isozyme/isoform in each plant tissue. Can use NADH, NADPH and monolignols as substrates. The sequence is that of Peroxidase N1 from Nicotiana tabacum (Common tobacco).